We begin with the raw amino-acid sequence, 401 residues long: Argininosuccinate synthase (401 aa).

8–16 (AYSGGLDTS) lines the ATP pocket. Tyr85 serves as a coordination point for L-citrulline. Gly115 contacts ATP. L-aspartate contacts are provided by Thr117, Asn121, and Asp122. Asn121 contacts L-citrulline. Positions 125, 173, 258, and 270 each coordinate L-citrulline.

It belongs to the argininosuccinate synthase family. Type 1 subfamily. As to quaternary structure, homotetramer.

It is found in the cytoplasm. It carries out the reaction L-citrulline + L-aspartate + ATP = 2-(N(omega)-L-arginino)succinate + AMP + diphosphate + H(+). The protein operates within amino-acid biosynthesis; L-arginine biosynthesis; L-arginine from L-ornithine and carbamoyl phosphate: step 2/3. The polypeptide is Argininosuccinate synthase (Staphylococcus aureus (strain MSSA476)).